Consider the following 134-residue polypeptide: Small ribosomal subunit protein uS11 (134 aa).

Belongs to the universal ribosomal protein uS11 family. As to quaternary structure, part of the 30S ribosomal subunit. Interacts with proteins S7 and S18. Binds to IF-3.

Located on the platform of the 30S subunit, it bridges several disparate RNA helices of the 16S rRNA. Forms part of the Shine-Dalgarno cleft in the 70S ribosome. The chain is Small ribosomal subunit protein uS11 from Herminiimonas arsenicoxydans.